The sequence spans 67 residues: Large ribosomal subunit protein bL31 (67 aa).

Positions 16, 18, 36, and 39 each coordinate Zn(2+).

This sequence belongs to the bacterial ribosomal protein bL31 family. Type A subfamily. In terms of assembly, part of the 50S ribosomal subunit. It depends on Zn(2+) as a cofactor.

Binds the 23S rRNA. This chain is Large ribosomal subunit protein bL31, found in Syntrophomonas wolfei subsp. wolfei (strain DSM 2245B / Goettingen).